A 222-amino-acid polypeptide reads, in one-letter code: 3-dehydroquinate dehydratase (222 aa).

3-dehydroquinate is bound by residues 32 to 34 (ELR) and arginine 64. Histidine 117 functions as the Proton donor/acceptor in the catalytic mechanism. The active-site Schiff-base intermediate with substrate is the lysine 143. Arginine 181 provides a ligand contact to 3-dehydroquinate.

The protein belongs to the type-I 3-dehydroquinase family. Homodimer.

It carries out the reaction 3-dehydroquinate = 3-dehydroshikimate + H2O. The protein operates within metabolic intermediate biosynthesis; chorismate biosynthesis; chorismate from D-erythrose 4-phosphate and phosphoenolpyruvate: step 3/7. Its function is as follows. Involved in the third step of the chorismate pathway, which leads to the biosynthesis of aromatic amino acids. Catalyzes the cis-dehydration of 3-dehydroquinate (DHQ) and introduces the first double bond of the aromatic ring to yield 3-dehydroshikimate. The polypeptide is 3-dehydroquinate dehydratase (Aeropyrum pernix (strain ATCC 700893 / DSM 11879 / JCM 9820 / NBRC 100138 / K1)).